A 504-amino-acid chain; its full sequence is Histidine ammonia-lyase (504 aa).

Residues 141–143 (ASG) constitute a cross-link (5-imidazolinone (Ala-Gly)). 2,3-didehydroalanine (Ser) is present on Ser142.

It belongs to the PAL/histidase family. In terms of processing, contains an active site 4-methylidene-imidazol-5-one (MIO), which is formed autocatalytically by cyclization and dehydration of residues Ala-Ser-Gly.

The protein resides in the cytoplasm. The catalysed reaction is L-histidine = trans-urocanate + NH4(+). Its pathway is amino-acid degradation; L-histidine degradation into L-glutamate; N-formimidoyl-L-glutamate from L-histidine: step 1/3. The sequence is that of Histidine ammonia-lyase from Geobacillus thermodenitrificans (strain NG80-2).